Reading from the N-terminus, the 319-residue chain is Tetrahydromethanopterin S-methyltransferase subunit H (319 aa).

This sequence belongs to the MtrH family. As to quaternary structure, the complex is composed of 8 subunits; MtrA, MtrB, MtrC, MtrD, MtrE, MtrF, MtrG and MtrH.

The enzyme catalyses 5-methyl-5,6,7,8-tetrahydromethanopterin + coenzyme M + 2 Na(+)(in) = 5,6,7,8-tetrahydromethanopterin + methyl-coenzyme M + 2 Na(+)(out). It functions in the pathway one-carbon metabolism; methanogenesis from CO(2); methyl-coenzyme M from 5,10-methylene-5,6,7,8-tetrahydromethanopterin: step 2/2. Functionally, part of a complex that catalyzes the formation of methyl-coenzyme M and tetrahydromethanopterin from coenzyme M and methyl-tetrahydromethanopterin. This is an energy-conserving, sodium-ion translocating step. MtrH catalyzes the transfer of the methyl group from methyl-tetrahydromethanopterin to the corrinoid prosthetic group of MtrA. This Methanococcus maripaludis (strain DSM 14266 / JCM 13030 / NBRC 101832 / S2 / LL) protein is Tetrahydromethanopterin S-methyltransferase subunit H.